Consider the following 404-residue polypeptide: Short chain dehydrogenase sirR (404 aa).

An N-terminal signal peptide occupies residues 1–28; sequence MHSKPQRALVIGATGVSGWSLCLQLLQT. Residues Ser56 and Leu58 each contribute to the NADP(+) site. N-linked (GlcNAc...) asparagine glycans are attached at residues Asn67 and Asn157. Ser237 acts as the Proton donor in catalysis. Asn274 is a glycosylation site (N-linked (GlcNAc...) asparagine). Position 291 (Val291) interacts with NADP(+).

The protein belongs to the short-chain dehydrogenases/reductases (SDR) family. Highly divergent.

It functions in the pathway mycotoxin biosynthesis. In terms of biological role, short chain dehydrogenase; part of the gene cluster that mediates the biosynthesis of sirodesmin PL, an epipolythiodioxopiperazine (ETP) characterized by a disulfide bridged cyclic dipeptide and that acts as a phytotoxin which is involved in the blackleg didease of canola. SirD catalyzes the O-prenylation of L-tyrosine (L-Tyr) in the presence of dimethylallyl diphosphate (DMAPP) to yield 4-O-dimethylallyl-L-Tyr, and therefore represents probably the first pathway-specific enzyme in the biosynthesis of sirodesmin PL. 4-O-dimethylallyl-L-Tyr, then undergoes condensation with L-Ser in a reaction catalyzed by the non-ribosomal peptide synthase sirP to form the diketopiperazine (DKP) backbone. Further bishydroxylation of the DKP performed by the cytochrome P450 monooxygenase sirC leads to the production of the intermediate phomamide. This step is essential to form the reactive thiol group required for toxicity of sirodesmin PL. The next steps of sirodesmin biosynthesis are not well understood yet, but some predictions could be made from intermediate compounds identification. Phomamide is converted into phomalizarine via oxidation, probably by sirT. Further oxidation, methylation (by sirM or sirN) and reduction steps convert phomalizarine to deacetyl sirodesmin. Finally, acetyltransferase sirH probably acetylates deacetyl sirodesmin to produce sirodesmin PL. This chain is Short chain dehydrogenase sirR, found in Leptosphaeria maculans (Blackleg fungus).